The chain runs to 395 residues: tRNA-specific 2-thiouridylase MnmA (395 aa).

ATP is bound by residues 7–14 (GLSGGVDS) and M33. Residues 95–97 (NPD) are interaction with target base in tRNA. The active-site Nucleophile is the C100. A disulfide bond links C100 and C200. An ATP-binding site is contributed by G124. The tract at residues 150 to 152 (KDQ) is interaction with tRNA. C200 (cysteine persulfide intermediate) is an active-site residue. Residues 346 to 347 (RY) form an interaction with tRNA region.

The protein belongs to the MnmA/TRMU family.

The protein localises to the cytoplasm. It carries out the reaction S-sulfanyl-L-cysteinyl-[protein] + uridine(34) in tRNA + AH2 + ATP = 2-thiouridine(34) in tRNA + L-cysteinyl-[protein] + A + AMP + diphosphate + H(+). In terms of biological role, catalyzes the 2-thiolation of uridine at the wobble position (U34) of tRNA, leading to the formation of s(2)U34. This chain is tRNA-specific 2-thiouridylase MnmA, found in Flavobacterium johnsoniae (strain ATCC 17061 / DSM 2064 / JCM 8514 / BCRC 14874 / CCUG 350202 / NBRC 14942 / NCIMB 11054 / UW101) (Cytophaga johnsonae).